We begin with the raw amino-acid sequence, 346 residues long: 3 beta-hydroxysteroid dehydrogenase/Delta 5--&gt;4-isomerase (346 aa).

Residue Y147 is the Proton acceptor of the active site. Position 151 (K151) interacts with NAD(+).

This sequence belongs to the 3-beta-HSD family.

The enzyme catalyses a 3beta-hydroxy-Delta(5)-steroid + NAD(+) = a 3-oxo-Delta(5)-steroid + NADH + H(+). It catalyses the reaction a 3-oxo-Delta(5)-steroid = a 3-oxo-Delta(4)-steroid. It functions in the pathway lipid metabolism; steroid biosynthesis. Functionally, catalyzes the oxidative conversion of Delta(5)-ene-3-beta-hydroxy steroid, and the oxidative conversion of ketosteroids. The 3-beta-HSD enzymatic system plays a crucial role in the biosynthesis of all classes of hormonal steroids. During viral infection, steroid production contributes to virulence by inhibiting the host inflammatory response. This is 3 beta-hydroxysteroid dehydrogenase/Delta 5--&gt;4-isomerase (OPG174) from Homo sapiens (Human).